Reading from the N-terminus, the 378-residue chain is 3-ketosteroid-9-alpha-monooxygenase, oxygenase component (378 aa).

Residues W26–V128 enclose the Rieske domain. 4 residues coordinate [2Fe-2S] cluster: C67, H69, C86, and H89. Residues N175, H181, H186, and D305 each coordinate Fe cation.

In terms of assembly, homotrimer. The two-component system 3-ketosteroid-9-alpha-monooxygenase is composed of an oxygenase component KshA and a reductase component KshB. [2Fe-2S] cluster is required as a cofactor. The cofactor is Fe cation.

The catalysed reaction is androsta-1,4-diene-3,17-dione + 2 reduced [2Fe-2S]-[ferredoxin] + O2 + 2 H(+) = 9alpha-hydroxyandrosta-1,4-diene-3,17-dione + 2 oxidized [2Fe-2S]-[ferredoxin] + H2O. Its activity is regulated as follows. KSH activity is completely inhibited by zinc ions. KshA is specifically inhibited by Fe(3+), Co(2+), Zn(2+) and Ni(2+) ions. In terms of biological role, in vitro, catalyzes the introduction of a 9alpha-hydroxyl moiety into the ring B of 3-ketosteroid substrates such as 1,4-androstadiene-3,17-dione (ADD), 4-androstene-3,17-dione (AD), 4-androstene-17beta-ol-3-one (testosterone), 4-pregnene-3,20-dione (progesterone), 19-nor-4-androstene-3,17-dione (nordion), 1-(5alpha)-androstene-3,17-dione, 5alpha-androstane-3,17-dione and 5beta-androstane-3,17-dione. KSH has the highest activity with 3-keto-delta4 steroid substrates. This is 3-ketosteroid-9-alpha-monooxygenase, oxygenase component from Rhodococcus rhodochrous.